Reading from the N-terminus, the 225-residue chain is MNSIKFPVLDRTTKNSVISTTLNDLSNWSRLSSLWPLLYGTSCCFIEFASLIGSRFDFDRYGLVPRSSPRQADLILTAGTVTMKMAPSLVRLYEQMPEPKYVIAMGACTITGGMFSTDSYSTVRGVDKLIPVDVYLPGCPPKPEAVIDAITKLRKKIAREIYKDRIRPQQGNRCFTTNHKFFVVRSPHTGNYDQELLYPPSSTSEISTETFFKYKSPVSSHELVN.

[4Fe-4S] cluster is bound by residues cysteine 43, cysteine 44, cysteine 108, and cysteine 139.

This sequence belongs to the complex I 20 kDa subunit family. NDH is composed of at least 16 different subunits, 5 of which are encoded in the nucleus. [4Fe-4S] cluster is required as a cofactor.

The protein resides in the plastid. It localises to the chloroplast thylakoid membrane. The enzyme catalyses a plastoquinone + NADH + (n+1) H(+)(in) = a plastoquinol + NAD(+) + n H(+)(out). The catalysed reaction is a plastoquinone + NADPH + (n+1) H(+)(in) = a plastoquinol + NADP(+) + n H(+)(out). NDH shuttles electrons from NAD(P)H:plastoquinone, via FMN and iron-sulfur (Fe-S) centers, to quinones in the photosynthetic chain and possibly in a chloroplast respiratory chain. The immediate electron acceptor for the enzyme in this species is believed to be plastoquinone. Couples the redox reaction to proton translocation, and thus conserves the redox energy in a proton gradient. This Olimarabidopsis pumila (Dwarf rocket) protein is NAD(P)H-quinone oxidoreductase subunit K, chloroplastic.